Consider the following 108-residue polypeptide: DNA-binding protein HBbu (108 aa).

Belongs to the bacterial histone-like protein family.

In terms of biological role, histone-like DNA-binding protein which is capable of wrapping DNA to stabilize it, and thus to prevent its denaturation under extreme environmental conditions. This Borrelia turicatae protein is DNA-binding protein HBbu (hbb).